A 546-amino-acid chain; its full sequence is CTP synthase (546 aa).

The amidoligase domain stretch occupies residues 1–269; that stretch reads MNSNTKIIFV…DAKLVELLNL (269 aa). Position 16 (Ser-16) interacts with CTP. Position 16 (Ser-16) interacts with UTP. ATP contacts are provided by residues 17-22 and Asp-74; that span reads SLGKGV. 2 residues coordinate Mg(2+): Asp-74 and Glu-143. CTP contacts are provided by residues 150-152, 190-195, and Lys-226; these read DIE and KTKPTQ. UTP contacts are provided by residues 190–195 and Lys-226; that span reads KTKPTQ. The Glutamine amidotransferase type-1 domain maps to 294-546; the sequence is IIAMVGKYVS…IQAAIENSNN (253 aa). Residue Gly-356 participates in L-glutamine binding. Cys-383 acts as the Nucleophile; for glutamine hydrolysis in catalysis. L-glutamine contacts are provided by residues 384 to 387, Glu-407, and Arg-474; that span reads LGMQ. Active-site residues include His-519 and Glu-521.

This sequence belongs to the CTP synthase family. As to quaternary structure, homotetramer.

It catalyses the reaction UTP + L-glutamine + ATP + H2O = CTP + L-glutamate + ADP + phosphate + 2 H(+). The catalysed reaction is L-glutamine + H2O = L-glutamate + NH4(+). It carries out the reaction UTP + NH4(+) + ATP = CTP + ADP + phosphate + 2 H(+). Its pathway is pyrimidine metabolism; CTP biosynthesis via de novo pathway; CTP from UDP: step 2/2. Its activity is regulated as follows. Allosterically activated by GTP, when glutamine is the substrate; GTP has no effect on the reaction when ammonia is the substrate. The allosteric effector GTP functions by stabilizing the protein conformation that binds the tetrahedral intermediate(s) formed during glutamine hydrolysis. Inhibited by the product CTP, via allosteric rather than competitive inhibition. Catalyzes the ATP-dependent amination of UTP to CTP with either L-glutamine or ammonia as the source of nitrogen. Regulates intracellular CTP levels through interactions with the four ribonucleotide triphosphates. This chain is CTP synthase, found in Francisella tularensis subsp. holarctica (strain FTNF002-00 / FTA).